Here is a 173-residue protein sequence, read N- to C-terminus: Protein-export protein SecB (173 aa).

The protein belongs to the SecB family. As to quaternary structure, homotetramer, a dimer of dimers. One homotetramer interacts with 1 SecA dimer.

The protein localises to the cytoplasm. Functionally, one of the proteins required for the normal export of preproteins out of the cell cytoplasm. It is a molecular chaperone that binds to a subset of precursor proteins, maintaining them in a translocation-competent state. It also specifically binds to its receptor SecA. The chain is Protein-export protein SecB from Ralstonia nicotianae (strain ATCC BAA-1114 / GMI1000) (Ralstonia solanacearum).